Here is an 897-residue protein sequence, read N- to C-terminus: Serine/threonine-protein kinase ATG1 (897 aa).

The 302-residue stretch at 24–325 folds into the Protein kinase domain; sequence YTAEKEIGKG…FEEFFANKVV (302 aa). ATP contacts are provided by residues 30–38 and Lys54; that span reads IGKGSFATV. Ser34 is modified (phosphoserine). Position 129 is a phosphothreonine (Thr129). Catalysis depends on Asp172, which acts as the Proton acceptor. Thr226 carries the post-translational modification Phosphothreonine; by autocatalysis. Ser304, Ser365, and Ser390 each carry phosphoserine. Residues 429-432 carry the LIR motif; it reads YVVV. Positions 490-509 are disordered; that stretch reads LLRATSSSSGGSDGSRRPSL. Ser508 and Ser515 each carry phosphoserine; by PKA. 3 positions are modified to phosphoserine: Ser533, Ser551, and Ser552. Thr590 carries the phosphothreonine modification. Residues Ser621, Ser635, Ser638, Ser647, Ser677, Ser680, Ser683, Ser769, and Ser783 each carry the phosphoserine modification. Residues 880–886 are required for Cvt trafficking; that stretch reads DSIANRL.

This sequence belongs to the protein kinase superfamily. Ser/Thr protein kinase family. APG1/unc-51/ULK1 subfamily. Homodimer. Dimerization requires the presence of ATG13. Forms a ternary complex with ATG13 and ATG17. Also interacts with ATG11. Post-translationally, autophosphorylated at Thr-226 and Ser-390. The phosphorylation state may play a role in the induction of protein degradation upon starvation. Phosphorylation at Thr-226 within the activation loop is required for protein kinase activity whereas phosphorylation at Ser-34 leads to inhibition of kinase activity. Phosphorylation of Ser-508 and Ser-515 by PKA is required to induce autophagy but not for kinase activity.

It localises to the cytoplasm. Its subcellular location is the preautophagosomal structure membrane. The catalysed reaction is L-seryl-[protein] + ATP = O-phospho-L-seryl-[protein] + ADP + H(+). It catalyses the reaction L-threonyl-[protein] + ATP = O-phospho-L-threonyl-[protein] + ADP + H(+). Its activity is regulated as follows. Activated by hypophosphorylated form of ATG13 (present in nitrogen starvation conditions). Also activated by autophopsphorylation of Thr-226 and inhibited by phosphorylation of Ser-34. In terms of biological role, serine/threonine protein kinase involved in the cytoplasm to vacuole transport (Cvt) and found to be essential in autophagy, where it is required for the formation of autophagosomes. Involved in the clearance of protein aggregates which cannot be efficiently cleared by the proteasome. Required for selective autophagic degradation of the nucleus (nucleophagy) as well as for mitophagy which contributes to regulate mitochondrial quantity and quality by eliminating the mitochondria to a basal level to fulfill cellular energy requirements and preventing excess ROS production. Also involved in endoplasmic reticulum-specific autophagic process, in selective removal of ER-associated degradation (ERAD) substrates. Plays a key role in ATG9 and ATG23 cycling through the pre-autophagosomal structure and is necessary to promote ATG18 binding to ATG9 through phosphorylation of ATG9. Catalyzes phosphorylation of ATG4, decreasing the interaction between ATG4 and ATG8 and impairing deconjugation of PE-conjugated forms of ATG8. Finally, ATG1 is also required for the maintenance of cell viability under starvation and for glycogen storage during stationary phase. Plays a role in genome stability through suppression of abnormal mitosis under starvation, and in regulation of filamentous growth. The chain is Serine/threonine-protein kinase ATG1 from Saccharomyces cerevisiae (strain YJM789) (Baker's yeast).